The primary structure comprises 314 residues: Cytochrome bo(3) ubiquinol oxidase subunit 2 (314 aa).

The first 23 residues, 1-23 (MSKKRYPRLFGILPFLGMLLLSG), serve as a signal peptide directing secretion. Residue Cys24 is the site of N-palmitoyl cysteine attachment. Cys24 is lipidated: S-diacylglycerol cysteine. At 24 to 42 (CNWTLLDPKGQVGIEQKNL) the chain is on the periplasmic side. The helical transmembrane segment at 43 to 63 (ILIATGLMLLVVIPVIIMTVV) threads the bilayer. Residues 64-86 (FAWKYRASNKAATYTPDWSHSTK) are Cytoplasmic-facing. The helical transmembrane segment at 87–107 (IEAAVWIIPILIIIALGYFTY) threads the bilayer. Over 108–314 (HSTHKLDPYR…SMQPAAGAEE (207 aa)) the chain is Periplasmic. Basic and acidic residues predominate over residues 278–293 (YEGMNRGRPSHEEAGS). A disordered region spans residues 278-314 (YEGMNRGRPSHEEAGSKDLATTKGVESSMQPAAGAEE).

This sequence belongs to the cytochrome c oxidase subunit 2 family. Heterooctamer of two A chains, two B chains, two C chains and two D chains.

It localises to the cell inner membrane. In terms of biological role, cytochrome bo(3) ubiquinol terminal oxidase is the component of the aerobic respiratory chain of E.coli that predominates when cells are grown at high aeration. Has proton pump activity across the membrane in addition to electron transfer, pumping 2 protons/electron. This chain is Cytochrome bo(3) ubiquinol oxidase subunit 2 (cyoA), found in Pseudomonas putida (Arthrobacter siderocapsulatus).